The primary structure comprises 65 residues: Small ribosomal subunit protein bS21 (65 aa).

This sequence belongs to the bacterial ribosomal protein bS21 family.

The protein is Small ribosomal subunit protein bS21 of Cytophaga hutchinsonii (strain ATCC 33406 / DSM 1761 / CIP 103989 / NBRC 15051 / NCIMB 9469 / D465).